We begin with the raw amino-acid sequence, 379 residues long: Homoserine O-succinyltransferase (379 aa).

The AB hydrolase-1 domain occupies 51 to 360 (NAVLICHALS…DSPYGHDAFL (310 aa)). Ser-157 acts as the Nucleophile in catalysis. Arg-227 provides a ligand contact to substrate. Residues Asp-323 and His-356 contribute to the active site. Substrate is bound at residue Asp-357.

It belongs to the AB hydrolase superfamily. MetX family. In terms of assembly, homodimer.

It localises to the cytoplasm. It carries out the reaction L-homoserine + succinyl-CoA = O-succinyl-L-homoserine + CoA. It functions in the pathway amino-acid biosynthesis; L-methionine biosynthesis via de novo pathway; O-succinyl-L-homoserine from L-homoserine: step 1/1. Requires MetW for activity. Transfers a succinyl group from succinyl-CoA to L-homoserine, forming succinyl-L-homoserine. The protein is Homoserine O-succinyltransferase of Pseudomonas putida (strain ATCC 47054 / DSM 6125 / CFBP 8728 / NCIMB 11950 / KT2440).